A 335-amino-acid polypeptide reads, in one-letter code: Ferrochelatase (335 aa).

The Fe cation site is built by H192 and E291.

This sequence belongs to the ferrochelatase family.

The protein resides in the cytoplasm. The catalysed reaction is heme b + 2 H(+) = protoporphyrin IX + Fe(2+). Its pathway is porphyrin-containing compound metabolism; protoheme biosynthesis; protoheme from protoporphyrin-IX: step 1/1. In terms of biological role, catalyzes the ferrous insertion into protoporphyrin IX. This Bdellovibrio bacteriovorus (strain ATCC 15356 / DSM 50701 / NCIMB 9529 / HD100) protein is Ferrochelatase.